The following is a 2368-amino-acid chain: MTSSGDSSPQIPIAIVGLGCRFPGDADSPKKFWDILKEGRDAYSPRTDRWNPDAFYHPNKDRANTQPTKGGHFLKQDPYVFDPSFFNITATEAIALDPKQRLALEVAYEALENAGFPLQKVAGSQTACYMGSAMADYRDSISRDFGHAPKYFVLGTCEEMISNRISHFFDMHGPSATVHTACSSSLVATHVACQSLRSGEADMALAGGVGIMLTPDSSLQLNNMSFLNPEGHSRSFDADAGGYARGEGCGILVMKRLDDAVRDGDNIRAVIRGSGVNSDGWTQGVTMPSPEAQAALIKQVFGKNKLDYDTIQYVEAHGTGTKAGDPVETKAIYDTIGRGINKSRKLWIGSVKPNIGHLEAAAGVAGIIKGVLSLENSAIPPNIYFSKPNPAIKLDEWNMAVPTKLVNWPVAQTKRMTVSGFGMGGTNGLVVLEAYVPERLLNGATKVTTAKDTAHSGKRLFVCSSQDQAGFKRIGEAFVDHLDNLGPIASSSGYLANLAHTLSTARAGLSWRTTFVADSKAELREHLTTTLGQDATRVSDTQAQRIGFVFTGQGAQWAGMGVEMLERPVFGASVAESAKLLRSFGCTWDPATELQKAAKESRLAVPEISQPICTIIQIALVDELKSWGVSPAKVVGHSSGEIAAAYTIGALSHRDAMAVAYFRGMASTALKTSAPHLEGGMMAVGTSAEAAQTIIAETKNSISGDITIACVNSPSSVTLSGDAKALEELRKILDARSVFARRLKVDVAYHSSHMNVAAPEYQQSIADIEPRLCSDEVEEGSLPVMVSSVTTEQVSPELLGTYYWIRNLVSPVQFSDALRELVAPGGSDKNDVDLLIEIGPHSALGGPIEQILSFHNVQKVDYKSVLTRGQNALDTSLSLASDLFVRGIQLDMEKVNGDSDCHLLNDLPSYPWNHSKAFRADSRIQRELLQSKHPRHSMIGLKQPMLDESQHVWRNYVRLTDEPWLRGHVVGGTALVPGAGMLSMIFEAVQQLVDPGKPAHSLRVRDVKFSAALTLPEDTSIEVVTTLRPHLVSTSGSTPASWWEFTISSCPGTDQIQDNCRGLVAIEYTNKRSEQMIYEDVNEENSRIADFHRVRDESPLMIRREKFYEHMQKSGYNYGETFQGMETVHLGDGETAFHVKLIDIGETFSKGQLDRPFLIPGSSLDAIFQSIFGSTFKNGAFEVEKPNFLAYIGELEISLDIPGEVGYVMPGVCFSRKHGFNQQSADIFTFDKSLSRMHLAVRDFRMTEPEVGDDASDGFEPWAFTSAPHWNYAFSLLKTEELRSVLSKVTTQDAPVELLRTILHENPSASVLELIPEIGDLAIASSYQLPKGAIQPSQLRYAVAKDIPDSFIDENLVGEVFALDGVGEDDRKISADVLIVPSSLDLLEDRDAILARFLKLAGPAALMITASGLHSARSVFEAHGFQAFPGLNGIASLPGLYSHAEEPSLRQTNRGTRDTSDTDITILEPSSPSFNTTEFSKTLSSRLEDQNYSVTIRKWAGGETEEFQNTTYISLLELEQPFLDNLSDPDFQGIKNLVLGSNRLIWLTLGDDPSFGAVDGLSRVMRSELGTPKFQVMHLSGEAGLLSGPELTVRVLKSPTEDTEFRERDGLLQVIRIFESPDVNQSLRGHLENSTRILPIKQLDYPVRLTVGKPGFLDSLQFIKDRRTEAPLPENEIEIDVHASGVNFRDVMASMGLISTPILGFEASGVVTKCGSQVSQFRTGARVSFVGEHTHSTRIRADPRLVAPIPDDVSFEEAASLPIVGATAYHTLTNLARLRKGQTILIHAAAGGVGQAMIQLASHFGLVIYATVGTEDKRKLLGEKYNIPPENILNSRDASFAKGIKRLTGGRGVDCVINSLSGELLRASWGCVAPFGIFIELGLRDITDNMRLDMRPFSNVTSFTFCNILALMQQDPDAMGLVLKETFKLVSQGILTSPFPTTVFPVEQTQEAFRLMQQGKHRGKLVLSFAGDPQAPVHCEAKESLRLDGNATYLIIGGLGGLGRSMALELVASGARHLAFISRSGDSTPQAKATLAELEQRNLDFRVYRGDVSNEESFLDAMKLCSSDLPPIKGVIQMAMVLKDIIFEKMTHEQWTIPLRPKIQGTWNIHQYFDESRPLDFMVFCSSTSGIHGYPSQSQYAAGNTYQDTLAAYRRAHGLKAVAVNLTIIREVGILAEQGTTGNIAVWEEALGIKEPAFHALMKTLIAGQQGPAGSEFLPPQVSTGLGTADIMSSYNLALPDYFQDPRFGPLAVSTFSTNVAGESQSAAVSLSSKLIEATNVDQASEIITEGLVTKVADMLQIPVSEVDASRPMYRYGVDSLVALEVRNWIVKEMKATIALLEILAAVPMNVLAKTIASRSKHLAATLD.

A Ketosynthase family 3 (KS3) domain is found at 10–434 (QIPIAIVGLG…GTNGLVVLEA (425 aa)). Active-site for beta-ketoacyl synthase activity residues include C182, H317, and H357. The malonyl-CoA:ACP transacylase (MAT) domain stretch occupies residues 548–877 (FVFTGQGAQW…RGQNALDTSL (330 aa)). The active-site For malonyltransferase activity is S638. The interval 936–1071 (HSMIGLKQPM…GLVAIEYTNK (136 aa)) is N-terminal hotdog fold. The tract at residues 936–1175 (HSMIGLKQPM…AIFQSIFGST (240 aa)) is dehydratase (DH) domain. A PKS/mFAS DH domain is found at 936-1255 (HSMIGLKQPM…MTEPEVGDDA (320 aa)). Catalysis depends on H968, which acts as the Proton acceptor; for dehydratase activity. The segment at 1099–1255 (PLMIRREKFY…MTEPEVGDDA (157 aa)) is C-terminal hotdog fold. D1165 (proton donor; for dehydratase activity) is an active-site residue. The enoylreductase (ER) domain stretch occupies residues 1655-1967 (GFLDSLQFIK…QGKHRGKLVL (313 aa)). Positions 1991–2170 (ATYLIIGGLG…AVAVNLTIIR (180 aa)) are catalytic ketoreductase (KRc) domain. A Carrier domain is found at 2283–2360 (QASEIITEGL…VLAKTIASRS (78 aa)). Residue S2320 is modified to O-(pantetheine 4'-phosphoryl)serine.

Its pathway is secondary metabolite biosynthesis. Highly reducing polyketide synthase; part of the gene cluster that mediates the biosynthesis of cladosporin, a tricyclic octaketide that acts as an antimalarial agent though inhibition of the Plasmodium falciparum lysyl-tRNA synthetase. The highly reducing polyketide synthase cla2 is responsible for biosynthesis up to the pentaketide stage, including of the tetrahydropyran (THP) ring, whereas the three subsequent ketide extensions with no reduction are catalyzed by the non-reducing polyketide synthase cla3. The sequence is that of Highly reducing polyketide synthase cla2 from Cladosporium cladosporioides.